A 219-amino-acid polypeptide reads, in one-letter code: Proteasome subunit beta type-9 (219 aa).

Positions 1 to 20 are cleaved as a propeptide — removed in mature form; sequence MLQAGAPTAGSFRTGEVHTG. Thr-21 (nucleophile) is an active-site residue. Residues Lys-53 and Lys-109 each carry the N6-acetyllysine modification.

It belongs to the peptidase T1B family. In terms of assembly, the 26S proteasome consists of a 20S proteasome core and two 19S regulatory subunits. The 20S proteasome core is composed of 28 subunits that are arranged in four stacked rings, resulting in a barrel-shaped structure. The two end rings are each formed by seven alpha subunits, and the two central rings are each formed by seven beta subunits. The catalytic chamber with the active sites is on the inside of the barrel. Component of the immunoproteasome, where it displaces the equivalent housekeeping subunit PSMB6. Component of the spermatoproteasome, a form of the proteasome specifically found in testis. Interacts with NCOA2 and NCOA3. Post-translationally, autocleaved. The resulting N-terminal Thr residue of the mature subunit is responsible for the nucleophile proteolytic activity. Detected in the cytoplasmic lobe of elongated spermatids, in residual bodies, and in the acrosomal cap of round spermatids.

It localises to the cytoplasm. It is found in the nucleus. It carries out the reaction Cleavage of peptide bonds with very broad specificity.. The proteasome is a multicatalytic proteinase complex which is characterized by its ability to cleave peptides with Arg, Phe, Tyr, Leu, and Glu adjacent to the leaving group at neutral or slightly basic pH. The proteasome has an ATP-dependent proteolytic activity. This subunit is involved in antigen processing to generate class I binding peptides. The chain is Proteasome subunit beta type-9 (Psmb9) from Rattus norvegicus (Rat).